The sequence spans 59 residues: MRQLKGKPKKETSKDKKERKQAMQEARQQITTVVLPTLAVVVLLIVVFVYVATRPTITE.

Positions 1–23 (MRQLKGKPKKETSKDKKERKQAM) are disordered. Basic and acidic residues predominate over residues 9-22 (KKETSKDKKERKQA). Positions 9–31 (KKETSKDKKERKQAMQEARQQIT) form a coiled coil. The chain crosses the membrane as a helical span at residues 32 to 52 (TVVLPTLAVVVLLIVVFVYVA).

The protein belongs to the SMCO4 family.

It localises to the membrane. In Homo sapiens (Human), this protein is Single-pass membrane and coiled-coil domain-containing protein 4 (SMCO4).